We begin with the raw amino-acid sequence, 209 residues long: Casparian strip membrane protein 1 (209 aa).

Residues 1–35 form a disordered region; the sequence is MKTGESTAIDIAPETNNSGPIGKKKSTTPLLAAPV. Topologically, residues 1–46 are cytoplasmic; that stretch reads MKTGESTAIDIAPETNNSGPIGKKKSTTPLLAAPVPDRGTHRMKRG. A helical transmembrane segment spans residues 47-67; it reads LAIFDFVLRIGVLASALAAAA. The Extracellular portion of the chain corresponds to 68 to 96; the sequence is AMGTSEQTLPFFTQFFQFEASYDDLPTFQ. A helical transmembrane segment spans residues 97 to 117; that stretch reads FFVVAMAVVAGYVVLSIPFSI. Over 118–129 the chain is Cytoplasmic; that stretch reads VCIIRPHAAGPR. The helical transmembrane segment at 130–150 threads the bilayer; sequence VLLLILDSVALTLNTAAAGAA. Residues 151–182 are Extracellular-facing; it reads AAVVSLAHSGNSSTNWLAICNQFGDFCQQASG. Asn161 carries an N-linked (GlcNAc...) asparagine glycan. Residues 183–203 form a helical membrane-spanning segment; that stretch reads AVVGSFAAVLLFLLLILFSAL. Over 204–209 the chain is Cytoplasmic; that stretch reads SLKNSH.

Belongs to the Casparian strip membrane proteins (CASP) family. Homodimer and heterodimers.

The protein localises to the cell membrane. Functionally, regulates membrane-cell wall junctions and localized cell wall deposition. Required for establishment of the Casparian strip membrane domain (CSD) and the subsequent formation of Casparian strips, a cell wall modification of the root endodermis that determines an apoplastic barrier between the intraorganismal apoplasm and the extraorganismal apoplasm and prevents lateral diffusion. The protein is Casparian strip membrane protein 1 of Cucumis melo (Muskmelon).